The following is a 506-amino-acid chain: MSPPGGDATVGSDEKRQKGKATPDTIKMGCIAMVMKEGQLRRAEILSIKDTKSGRQFYCNFDNFNKRLDEWVPAARIDFEQDVEWPNPDKDKQKDAKTKKNNSTVSKKQPSKKNNQKKASKREQSVASDGQTPHPWTEFVESQPGKNNRQRGKTEDGTDVNASLEVGGDKGVKRKADEIDMDEDEIPAAKKQRQPSFSREQEIEKLRTSGSMTQNPTEISRIRNISKVEFGRYVLFPWYFSPYPQIFDQEDCIYICEFCLSYYGELKSFVRHRQKCTLHHPPGNEIYRDDYVSFFEIDGRRQRTWCRNLCLLSKMFLDHKTLYYDVDPFLFYVMTTRDDRGCHIIGYFSKEKESTDGYNVACILTLPQYQRKGYGRLLIQFSYELSKIEGKLGSPEKPLSDLGLLSYRQYWSENIIDILLGYNERKEACTIENIAVALAMTTQDVEHTLQALKMQVYHKGEHKIVVPEKLIKQREKSKAKQKRLIDPERIQWKPPVFTALNRTWGW.

Residues 1–24 are disordered; it reads MSPPGGDATVGSDEKRQKGKATPD. Residues 26–78 enclose the Tudor-knot domain; it reads IKMGCIAMVMKEGQLRRAEILSIKDTKSGRQFYCNFDNFNKRLDEWVPAARID. The tract at residues 82-215 is disordered; that stretch reads DVEWPNPDKD…LRTSGSMTQN (134 aa). Residues 87–98 show a composition bias toward basic and acidic residues; that stretch reads NPDKDKQKDAKT. Positions 109-120 are enriched in basic residues; the sequence is QPSKKNNQKKAS. Over residues 167–178 the composition is skewed to basic and acidic residues; sequence GGDKGVKRKADE. Residues 220 to 494 form the MYST-type HAT domain; sequence SRIRNISKVE…IDPERIQWKP (275 aa). The C2HC MYST-type zinc finger occupies 253–278; that stretch reads IYICEFCLSYYGELKSFVRHRQKCTL. Positions 303–324 match the ESA1-RPD3 motif motif; it reads RTWCRNLCLLSKMFLDHKTLYY. Residue K320 is modified to N6-acetyllysine; by autocatalysis. Acetyl-CoA is bound by residues 361 to 365 and 370 to 376; these read ACILT and QRKGYGR. E396 (proton donor/acceptor) is an active-site residue. S400 provides a ligand contact to acetyl-CoA.

Belongs to the MYST (SAS/MOZ) family. As to quaternary structure, component of the NuA4 histone acetyltransferase complex. In terms of processing, autoacetylation at Lys-320 is required for proper function.

It is found in the nucleus. It localises to the chromosome. The enzyme catalyses L-lysyl-[histone] + acetyl-CoA = N(6)-acetyl-L-lysyl-[histone] + CoA + H(+). It carries out the reaction L-lysyl-[protein] + acetyl-CoA = N(6)-acetyl-L-lysyl-[protein] + CoA + H(+). The catalysed reaction is 2-hydroxyisobutanoyl-CoA + L-lysyl-[protein] = N(6)-(2-hydroxyisobutanoyl)-L-lysyl-[protein] + CoA + H(+). It catalyses the reaction (2E)-butenoyl-CoA + L-lysyl-[protein] = N(6)-(2E)-butenoyl-L-lysyl-[protein] + CoA + H(+). In terms of biological role, catalytic component of the NuA4 histone acetyltransferase (HAT) complex which is involved in epigenetic transcriptional activation of selected genes principally by acetylation of nucleosomal histones H4, H3, H2B, H2A and H2A variant H2A.Z. Acetylates histone H4 to form H4K5ac, H4K8ac, H4K12ac and H4K16ac, histone H3 to form H3K14ac, and histone H2A to form H2AK4ac and H2AK7ac. The NuA4 complex is involved in the DNA damage response and is required for chromosome segregation. The NuA4 complex plays a direct role in repair of DNA double-strand breaks (DSBs) through homologous recombination. Recruitment to promoters depends on H3K4me. Also acetylates non-histone proteins. In addition to protein acetyltransferase, can use different acyl-CoA substrates, such as 2-hydroxyisobutanoyl-CoA (2-hydroxyisobutyryl-CoA) or (2E)-butenoyl-CoA (crotonyl-CoA), and is able to mediate protein 2-hydroxyisobutyrylation and crotonylation, respectively. In Neurospora crassa (strain ATCC 24698 / 74-OR23-1A / CBS 708.71 / DSM 1257 / FGSC 987), this protein is Histone acetyltransferase esa-1 (esa-1).